We begin with the raw amino-acid sequence, 691 residues long: Pentatricopeptide repeat-containing protein ATP4, chloroplastic (691 aa).

A compositionally biased stretch (low complexity) spans 1–17; it reads MASLPLCRSPSSLLPSW. The transit peptide at 1-35 directs the protein to the chloroplast; sequence MASLPLCRSPSSLLPSWPHRPISASFNPKNPSSPV. Residues 1-76 form a disordered region; it reads MASLPLCRSP…SSNTRFLWVN (76 aa). A compositionally biased stretch (polar residues) spans 24-33; sequence ASFNPKNPSS. The segment covering 45–56 has biased composition (pro residues); it reads PPQPQDPSPPSD. The span at 61-76 shows a compositional bias: polar residues; the sequence is GTRPSSSSNTRFLWVN. PPR repeat units follow at residues 163–197, 198–232, 233–267, 268–302, 303–337, 338–372, 373–403, 411–445, 446–480, and 546–580; these read KVIL…GVQP, DNAT…GCSP, DMLT…KWQL, DPVI…GVRP, NLVV…QVQP, SRAT…AMGI, DVML…MKAS, DSWS…GFKP, NIFV…GIIP, and KMPY…GIYA. The Smr domain maps to 592–677; the sequence is LHLRGLSVGA…WFLTTNVAAK (86 aa).

Belongs to the PPR family. P subfamily.

It is found in the plastid. It localises to the chloroplast stroma. In terms of biological role, involved in translation and accumulation of chloroplast ATP synthase subunits. Interacts with the 5'-UTR of the chloroplast bicistronic atpB and atpE mRNA and activates its translation by facilitating ribosome association with the mRNA. Required for accumulation and activity of the chloroplast ATP synthase. Enhances atpA translation and is required for accumulation of specific processed atpF and psaJ transcripts. Required for the stabilization of bicistronic rpl16 and rpl14 mRNAs. The protein is Pentatricopeptide repeat-containing protein ATP4, chloroplastic of Zea mays (Maize).